Here is a 519-residue protein sequence, read N- to C-terminus: MTSTFNPRECKLSKQEGQNYGFFLRIEKDTEGHLVRVVEKGSPAEKAGLQDGDRVLRINDVFVDKEEHMQVVDLVRKSGNSVTLLVLDGDSYEKAVKTRVDLKELGQRQKEQGLSDNTLSPVMNGGVQTWTQPRLCYLVKEGGSYGFSLKTVQGKKGVYMTDITPQGVAMKAGVLADDHLIEVNGENVEDASHEQVVEKVKKSGSRVMFLLVDKETDKHHVEQKIQFKRETASLKLLPHQPRIVEMKKGSNGYGFYLRAGSEQKGQIIKDIDSGSPAEEAGLKNNDLVVAVNGESVETLDHDSVVEMIRKGGDQTSLLVVDKETDNMYRLAHFSPFLYYQSQELPNGSVKEAPAPTPTSLEVSSPPDTTEEVDHKPKLCRLAKGENGYGFHLNAIRGLPGSFIKEVQKGGPADLAGLEDEDVIIEVNGVNVLDEPYEKVVDRIQSSGKNVTLLVCGKKAYDYFQAKKIPIVSSLADPPDTPPDSKEGIVVESKHDSHMAKERAHSTASHSSSNSEDTEM.

3 PDZ domains span residues 9 to 90, 134 to 215, and 243 to 323; these read ECKL…LDGD, RLCY…VDKE, and IVEM…VDKE. Residues Ser148, Ser192, Ser250, Ser334, and Ser348 each carry the phosphoserine modification. A disordered region spans residues 347–374; that stretch reads GSVKEAPAPTPTSLEVSSPPDTTEEVDH. Positions 357-367 are enriched in polar residues; the sequence is PTSLEVSSPPD. The region spanning 378-458 is the PDZ 4 domain; sequence LCRLAKGENG…NVTLLVCGKK (81 aa). At Thr451 the chain carries Phosphothreonine. The interval 473 to 519 is disordered; sequence SLADPPDTPPDSKEGIVVESKHDSHMAKERAHSTASHSSSNSEDTEM. Residues 482-504 are compositionally biased toward basic and acidic residues; sequence PDSKEGIVVESKHDSHMAKERAH. Residues Ser492, Ser508, Ser510, Ser511, Ser512, and Ser514 each carry the phosphoserine modification. The span at 505–519 shows a compositional bias: low complexity; sequence STASHSSSNSEDTEM.

Belongs to the NHER family. As to quaternary structure, interacts with PDZK1IP1 and ABCC2. Binds to the C-terminal region of SLC26A3. Interacts (via PDZ domains 1 and 3) with SCARB1 (C-terminal domain). Forms a heterodimeric complex with NHERF1. Interacts with AKAP2, BCR, CFTR, SLCO1A1, SLC22A12, SLC22A4, SLC22A5, NHERF2 and SLC17A1. Component of a complex, composed of PDZK1, SYNGAP1, KLHL17 and NMDA receptors. Interacts (via PDZ1 domain) directly with KLHL17; the interaction is important for integrity of actin cytoskeleton structures in neurons. Interacts (via C-terminal PDZ domain) with SLC26A6 (via C-terminal domain). Interacts (via C-terminal PDZ domain) with SLC9A3 (via C-terminal domain). Interacts (via the first PDZ domain) with PTGIR (via non-isoprenylated C-terminus). Interacts (via PDZ domains 1 and 3) with SLC5A8 (via PDZ-binding motif); interaction increases nicotinate transport activity of SLC5A8.

The protein localises to the membrane. It is found in the cell membrane. Functionally, a scaffold protein that connects plasma membrane proteins and regulatory components, regulating their surface expression in epithelial cells apical domains. May be involved in the coordination of a diverse range of regulatory processes for ion transport and second messenger cascades. In complex with NHERF1, may cluster proteins that are functionally dependent in a mutual fashion and modulate the trafficking and the activity of the associated membrane proteins. May play a role in the cellular mechanisms associated with multidrug resistance through its interaction with ABCC2 and PDZK1IP1. May potentiate the CFTR chloride channel activity. Required for normal cell-surface expression of SCARB1. Plays a role in maintaining normal plasma cholesterol levels via its effects on SCARB1. Plays a role in the normal localization and function of the chloride-anion exchanger SLC26A6 to the plasma membrane in the brush border of the proximal tubule of the kidney. May be involved in the regulation of proximal tubular Na(+)-dependent inorganic phosphate cotransport therefore playing an important role in tubule function. This Pongo abelii (Sumatran orangutan) protein is Na(+)/H(+) exchange regulatory cofactor NHE-RF3 (PDZK1).